Here is a 535-residue protein sequence, read N- to C-terminus: Glucans biosynthesis protein D 1 (535 aa).

A signal peptide (tat-type signal) is located at residues 1–28 (MHRRDLLKQLAAGFLALAPGLTPSTASA). Residues 275–287 (RTDRAGDRQSAAR) form an insert region.

Belongs to the OpgD/OpgG family. In terms of processing, predicted to be exported by the Tat system. The position of the signal peptide cleavage has not been experimentally proven.

It is found in the periplasm. It functions in the pathway glycan metabolism; osmoregulated periplasmic glucan (OPG) biosynthesis. Functionally, probably involved in the control of the structural glucose backbone of osmoregulated periplasmic glucans (OPGs). This Ralstonia nicotianae (strain ATCC BAA-1114 / GMI1000) (Ralstonia solanacearum) protein is Glucans biosynthesis protein D 1 (opgD1).